The chain runs to 748 residues: Polyribonucleotide nucleotidyltransferase (748 aa).

2 residues coordinate Mg(2+): aspartate 522 and aspartate 528. Residues 588 to 647 (PRVTTIRVPVDKIGEVIGPKGKIINAITEETGAQISIEDDGTVFVGATDGPSAQAAIDRI) form the KH domain. The region spanning 659–728 (GERFLGTVVK…KRGKISLVLV (70 aa)) is the S1 motif domain.

The protein belongs to the polyribonucleotide nucleotidyltransferase family. It depends on Mg(2+) as a cofactor.

Its subcellular location is the cytoplasm. It catalyses the reaction RNA(n+1) + phosphate = RNA(n) + a ribonucleoside 5'-diphosphate. Functionally, involved in mRNA degradation. Catalyzes the phosphorolysis of single-stranded polyribonucleotides processively in the 3'- to 5'-direction. The sequence is that of Polyribonucleotide nucleotidyltransferase from Mycobacterium avium (strain 104).